We begin with the raw amino-acid sequence, 583 residues long: Membrane-bound O-acyltransferase gup1 (583 aa).

Over 1–52 (MLRLFRFDVLETSTKDTERPNSKSSRLSSTSGSSHPSSSSRLTVRSAVPEKS) the chain is Extracellular. Residues 15–42 (KDTERPNSKSSRLSSTSGSSHPSSSSRL) form a disordered region. Low complexity predominate over residues 22–40 (SKSSRLSSTSGSSHPSSSS). A helical transmembrane segment spans residues 53-73 (AFGSIEFIFYFSVILSILTIA). Over 74–119 (CFKIHYVSSPKHPNYKNIEKYLKPGWLFGQKVDSADFQYSAFRENM) the chain is Cytoplasmic. The chain crosses the membrane as a helical span at residues 120–140 (PILLLVIIVYNFLWRLVKLVF). Residues 141 to 159 (TKNTNDELAIKNNYRLCFS) lie on the Extracellular side of the membrane. Residues 160-180 (LLFALLVYGTGVIYVLTIALI) traverse the membrane as a helical segment. Over 181–191 (NYLISKSLKNS) the chain is Cytoplasmic. The helical transmembrane segment at 192–212 (IFNPLLTWTLDISVVFFKEYF) threads the bilayer. Residues 213-298 (AYCKFSSLHP…SCLDEDYNLK (86 aa)) are Extracellular-facing. The helical transmembrane segment at 299 to 319 (NFLTYIFYAPLYLAGPIISFN) threads the bilayer. Residues 320–343 (NFMSQMKYPTVSTLKYRNLLYAIR) are Cytoplasmic-facing. The chain crosses the membrane as a helical span at residues 344–364 (FLVCVLTMEFLLHYAYVTAIS). At 365–373 (KDGNWNQYS) the chain is on the extracellular side. The chain crosses the membrane as a helical span at residues 374 to 394 (AVESAMISFIVLFMTWLKLLI). Topologically, residues 395 to 444 (PWRLFRLWSLIDDIEPPENIVRCMCNNYSAVGFWRAWHRSFNRWLIRYIY) are cytoplasmic. Helical transmembrane passes span 445–465 (VPLG…TFVA) and 466–486 (LWHD…LFIL). Residue His-468 is part of the active site. At 487–512 (PERLCCFMSRRTGLTKHPYYRYISGF) the chain is on the cytoplasmic side. A helical transmembrane segment spans residues 513–533 (GAALNIYFMIICNLIGFAVGI). Over 534–549 (DGIKNVLVSFFLTLKG) the chain is Extracellular. The helical transmembrane segment at 550–570 (AMSAIAAFIMFFSAVQIMFQI) threads the bilayer. Topologically, residues 571-583 (RVNEEEEGINLRC) are cytoplasmic.

This sequence belongs to the membrane-bound acyltransferase family.

Its subcellular location is the cell membrane. The protein resides in the endoplasmic reticulum membrane. It localises to the mitochondrion membrane. Its function is as follows. Membrane-bound O-acyltransferase involved in the remodeling of glycosylphosphatidylinositol (GPI) anchors. Acts only on GPI-anchored proteins, but not on free GPI lipids. Also involved in lipid metabolism, having profound effects on sphingolipid-sterol-ordered domains integrity and assembly. Involved in cell integrity and apoptosis. This chain is Membrane-bound O-acyltransferase gup1 (gup1), found in Schizosaccharomyces pombe (strain 972 / ATCC 24843) (Fission yeast).